The following is a 389-amino-acid chain: tRNA-specific 2-thiouridylase MnmA (389 aa).

ATP-binding positions include 35–42 and Met61; that span reads GMSGGVDS. Positions 121–123 are interaction with target base in tRNA; sequence NPD. Residue Cys126 is the Nucleophile of the active site. Cysteines 126 and 223 form a disulfide. Gly151 lines the ATP pocket. The segment at 173–175 is interaction with tRNA; the sequence is KDQ. Cys223 functions as the Cysteine persulfide intermediate in the catalytic mechanism. The tract at residues 335 to 336 is interaction with tRNA; that stretch reads RY.

Belongs to the MnmA/TRMU family.

The protein localises to the cytoplasm. It carries out the reaction S-sulfanyl-L-cysteinyl-[protein] + uridine(34) in tRNA + AH2 + ATP = 2-thiouridine(34) in tRNA + L-cysteinyl-[protein] + A + AMP + diphosphate + H(+). Functionally, catalyzes the 2-thiolation of uridine at the wobble position (U34) of tRNA, leading to the formation of s(2)U34. The protein is tRNA-specific 2-thiouridylase MnmA of Actinobacillus pleuropneumoniae serotype 5b (strain L20).